A 206-amino-acid chain; its full sequence is Large ribosomal subunit protein uL4 (206 aa).

The segment at 47-77 (TRAQKGRSDVTGSTRKQWRQKGTGRARTGAA) is disordered.

Belongs to the universal ribosomal protein uL4 family. As to quaternary structure, part of the 50S ribosomal subunit.

One of the primary rRNA binding proteins, this protein initially binds near the 5'-end of the 23S rRNA. It is important during the early stages of 50S assembly. It makes multiple contacts with different domains of the 23S rRNA in the assembled 50S subunit and ribosome. Its function is as follows. Forms part of the polypeptide exit tunnel. The protein is Large ribosomal subunit protein uL4 of Nitrosomonas europaea (strain ATCC 19718 / CIP 103999 / KCTC 2705 / NBRC 14298).